We begin with the raw amino-acid sequence, 116 residues long: Ribosome-binding factor A (116 aa).

It belongs to the RbfA family. Monomer. Binds 30S ribosomal subunits, but not 50S ribosomal subunits or 70S ribosomes.

The protein localises to the cytoplasm. Functionally, one of several proteins that assist in the late maturation steps of the functional core of the 30S ribosomal subunit. Associates with free 30S ribosomal subunits (but not with 30S subunits that are part of 70S ribosomes or polysomes). Required for efficient processing of 16S rRNA. May interact with the 5'-terminal helix region of 16S rRNA. The chain is Ribosome-binding factor A from Staphylococcus aureus (strain JH9).